A 242-amino-acid chain; its full sequence is NADH-quinone oxidoreductase subunit C (242 aa).

Residues 67-101 (VVNSVGLGHKEQGAKPITNRRTTSDNVGESKSIDY) form an insert region.

The protein belongs to the complex I 30 kDa subunit family. In terms of assembly, NDH-1 is composed of 14 different subunits. Subunits NuoB, C, D, E, F, and G constitute the peripheral sector of the complex.

The protein resides in the cell inner membrane. It carries out the reaction a quinone + NADH + 5 H(+)(in) = a quinol + NAD(+) + 4 H(+)(out). In terms of biological role, NDH-1 shuttles electrons from NADH, via FMN and iron-sulfur (Fe-S) centers, to quinones in the respiratory chain. The immediate electron acceptor for the enzyme in this species is believed to be ubiquinone. Couples the redox reaction to proton translocation (for every two electrons transferred, four hydrogen ions are translocated across the cytoplasmic membrane), and thus conserves the redox energy in a proton gradient. The polypeptide is NADH-quinone oxidoreductase subunit C (Rickettsia conorii (strain ATCC VR-613 / Malish 7)).